Consider the following 402-residue polypeptide: Phosphoglycerate kinase (402 aa).

Residues aspartate 24–asparagine 26, arginine 40, histidine 63–arginine 66, arginine 122, and arginine 155 contribute to the substrate site. ATP-binding positions include lysine 206, glycine 297, glutamate 328, and glycine 357–serine 360.

It belongs to the phosphoglycerate kinase family. As to quaternary structure, monomer.

The protein resides in the cytoplasm. The catalysed reaction is (2R)-3-phosphoglycerate + ATP = (2R)-3-phospho-glyceroyl phosphate + ADP. It functions in the pathway carbohydrate degradation; glycolysis; pyruvate from D-glyceraldehyde 3-phosphate: step 2/5. The sequence is that of Phosphoglycerate kinase from Synechococcus elongatus (strain ATCC 33912 / PCC 7942 / FACHB-805) (Anacystis nidulans R2).